The chain runs to 288 residues: ATP synthase gamma chain (288 aa).

The protein belongs to the ATPase gamma chain family. In terms of assembly, F-type ATPases have 2 components, CF(1) - the catalytic core - and CF(0) - the membrane proton channel. CF(1) has five subunits: alpha(3), beta(3), gamma(1), delta(1), epsilon(1). CF(0) has three main subunits: a, b and c.

Its subcellular location is the cell inner membrane. Its function is as follows. Produces ATP from ADP in the presence of a proton gradient across the membrane. The gamma chain is believed to be important in regulating ATPase activity and the flow of protons through the CF(0) complex. In Trichlorobacter lovleyi (strain ATCC BAA-1151 / DSM 17278 / SZ) (Geobacter lovleyi), this protein is ATP synthase gamma chain.